Reading from the N-terminus, the 539-residue chain is Interleukin-2 receptor subunit beta (539 aa).

The first 26 residues, 1 to 26, serve as a signal peptide directing secretion; sequence MATIALPWSLSLYVFLLLLATPWASA. The Extracellular segment spans residues 27 to 240; sequence AVKNCSHLEC…RTRPADPMKE (214 aa). Asn-30, Asn-43, Asn-55, and Asn-71 each carry an N-linked (GlcNAc...) asparagine glycan. A disulfide bridge connects residues Cys-36 and Cys-46. A disulfide bond links Cys-74 and Cys-86. The Fibronectin type-III domain occupies 135–235; it reads APHSLQVLHI…QPLTFRTRPA (101 aa). Asn-150 and Asn-216 each carry an N-linked (GlcNAc...) asparagine glycan. The short motif at 221-225 is the WSXWS motif element; that stretch reads WSPWS. A helical transmembrane segment spans residues 241 to 268; that stretch reads ILPMSWLRYLLLVLGCFSGFFSCVYILV. Over 269-539 the chain is Cytoplasmic; it reads KCRYLGPWLK…LQAQDSVHLI (271 aa). The Box 1 motif motif lies at 281–289; the sequence is LKCHIPDPS. 3 disordered regions span residues 395–419, 440–465, and 477–516; these read VEEDGSRLPEGSPHPPLLPLAGEQD, PNTAYGGSRAPEERSPLSLHEGLPSL, and LERMPEGDGEGLSANSSGEQASVPEGNLHGQDQDRGQGPI.

It belongs to the type I cytokine receptor family. Type 4 subfamily. As to quaternary structure, non-covalent dimer of an alpha and a beta subunit. IL2R exists in 3 different forms: a high affinity dimer, an intermediate affinity monomer (beta subunit), and a low affinity monomer (alpha subunit). The high and intermediate affinity forms also associate with a gamma subunit. Interacts with SHB upon interleukin stimulation.

It localises to the cell membrane. The protein resides in the cell surface. Receptor for interleukin-2. This beta subunit is involved in receptor mediated endocytosis and transduces the mitogenic signals of IL2. Probably in association with IL15RA, involved in the stimulation of neutrophil phagocytosis by IL15. This is Interleukin-2 receptor subunit beta (Il2rb) from Mus musculus (Mouse).